Here is a 302-residue protein sequence, read N- to C-terminus: Sulfate adenylyltransferase subunit 2 (302 aa).

This sequence belongs to the PAPS reductase family. CysD subfamily. As to quaternary structure, heterodimer composed of CysD, the smaller subunit, and CysN.

It carries out the reaction sulfate + ATP + H(+) = adenosine 5'-phosphosulfate + diphosphate. The protein operates within sulfur metabolism; hydrogen sulfide biosynthesis; sulfite from sulfate: step 1/3. In terms of biological role, with CysN forms the ATP sulfurylase (ATPS) that catalyzes the adenylation of sulfate producing adenosine 5'-phosphosulfate (APS) and diphosphate, the first enzymatic step in sulfur assimilation pathway. APS synthesis involves the formation of a high-energy phosphoric-sulfuric acid anhydride bond driven by GTP hydrolysis by CysN coupled to ATP hydrolysis by CysD. The chain is Sulfate adenylyltransferase subunit 2 from Shewanella pealeana (strain ATCC 700345 / ANG-SQ1).